The primary structure comprises 832 residues: DEAD-box ATP-dependent RNA helicase 13 (832 aa).

Positions 1-12 (MAAAPPPPPPPQ) are enriched in pro residues. Disordered regions lie at residues 1 to 59 (MAAA…TMVE) and 91 to 173 (VEDL…DDNV). Residues 29–42 (RKGKKSRGAKKPRR) show a composition bias toward basic residues. The segment covering 43–55 (AAAAAAASTSSAG) has biased composition (low complexity). Basic residues predominate over residues 105–114 (QKKKKRKKRK). Over residues 128-137 (LVVECEEEGE) the composition is skewed to acidic residues. Basic residues predominate over residues 141-155 (KRVKKKRRSRKKRKV). Residues 156–167 (KEMEEKMESKED) are compositionally biased toward basic and acidic residues. Residues 198-226 (YAWRELRLHPLLITAVRRLGFKEPTPIQK) carry the Q motif motif. The region spanning 230-447 (PAAAHQGKDV…KLKRGLVTAK (218 aa)) is the Helicase ATP-binding domain. 243–250 (AETGSGKT) is a binding site for ATP. Residues 371-374 (DEAD) carry the DEAD box motif. In terms of domain architecture, Helicase C-terminal spans 484 to 645 (KLEESFIECS…QFPVDHAYMP (162 aa)). The interval 800 to 832 (RRLAENWRRKKQKEKKSTREQKRKEKRIAKERD) is disordered. The span at 814–832 (KKSTREQKRKEKRIAKERD) shows a compositional bias: basic and acidic residues.

Belongs to the DEAD box helicase family. DDX24/MAK5 subfamily.

The enzyme catalyses ATP + H2O = ADP + phosphate + H(+). In Oryza sativa subsp. japonica (Rice), this protein is DEAD-box ATP-dependent RNA helicase 13.